Reading from the N-terminus, the 383-residue chain is Deoxyguanosinetriphosphate triphosphohydrolase-like protein (383 aa).

The 137-residue stretch at 62–198 (RLTHSLEVST…AALADDISYI (137 aa)) folds into the HD domain.

It belongs to the dGTPase family. Type 2 subfamily.

This is Deoxyguanosinetriphosphate triphosphohydrolase-like protein from Rickettsia felis (strain ATCC VR-1525 / URRWXCal2) (Rickettsia azadi).